Here is a 579-residue protein sequence, read N- to C-terminus: Cytochrome P450 monooxygenase prx9 (579 aa).

The helical transmembrane segment at 6 to 25 (LPLGSFVGTTLLLFILYKLV) threads the bilayer. Residues Asn-194, Asn-292, and Asn-390 are each glycosylated (N-linked (GlcNAc...) asparagine). Cys-512 serves as a coordination point for heme.

The protein belongs to the cytochrome P450 family. Requires heme as cofactor.

The protein localises to the membrane. Its pathway is sesquiterpene biosynthesis. Its function is as follows. Cytochrome P450 monooxygenase; part of the gene cluster that mediates the biosynthesis of PR-toxin, a bicyclic sesquiterpene belonging to the eremophilane class and acting as a mycotoxin. The first step of the pathway is catalyzed by the aristolochene synthase which performs the cyclization of trans,trans-farnesyl diphosphate (FPP) to the bicyclic sesquiterpene aristolochene. Following the formation of aristolochene, the non-oxygenated aristolochene is converted to the trioxygenated intermediate eremofortin B, via 7-epi-neopetasone. This conversion appears to involve three enzymes, a hydroxysterol oxidase-like enzyme, the quinone-oxidase prx3 that forms the quinone-type-structure in the bicyclic nucleus of aristolochene with the C8-oxo group and the C-3 hydroxyl group, and the P450 monooxygenase prx9 that introduces the epoxide at the double bond between carbons 1 and 2. No monoxy or dioxy-intermediates have been reported to be released to the broth, so these three early oxidative reactions may be coupled together. Eremofortin B is further oxidized by another P450 monooxygenase, that introduces a second epoxide between carbons 7 and 11 prior to acetylation to eremofortin A by the acetyltransferase prx11. The second epoxidation may be performed by a second P450 monooxygenase. After the acetylation step, eremofortin A is converted to eremofortin C and then to PR-toxin. First the conversion of eremofortin A to eremofortin C proceeds by oxidation of the side chain of the molecule at C-12 and is catalyzed by the short-chain oxidoreductase prx1. The cytochrome P450 monooxygenase prx8 also plays a role in this step. The primary alcohol formed at C-12 is finally oxidized by the short-chain alcohol dehydrogenase prx4 that forms PR-toxin. This is Cytochrome P450 monooxygenase prx9 from Penicillium rubens (strain ATCC 28089 / DSM 1075 / NRRL 1951 / Wisconsin 54-1255) (Penicillium chrysogenum).